We begin with the raw amino-acid sequence, 169 residues long: ATP synthase subunit b (169 aa).

Residues 3–23 (IKILLLVLPFFAFASEHGGVN) form a helical membrane-spanning segment.

This sequence belongs to the ATPase B chain family. In terms of assembly, F-type ATPases have 2 components, F(1) - the catalytic core - and F(0) - the membrane proton channel. F(1) has five subunits: alpha(3), beta(3), gamma(1), delta(1), epsilon(1). F(0) has three main subunits: a(1), b(2) and c(10-14). The alpha and beta chains form an alternating ring which encloses part of the gamma chain. F(1) is attached to F(0) by a central stalk formed by the gamma and epsilon chains, while a peripheral stalk is formed by the delta and b chains.

The protein resides in the cell inner membrane. In terms of biological role, f(1)F(0) ATP synthase produces ATP from ADP in the presence of a proton or sodium gradient. F-type ATPases consist of two structural domains, F(1) containing the extramembraneous catalytic core and F(0) containing the membrane proton channel, linked together by a central stalk and a peripheral stalk. During catalysis, ATP synthesis in the catalytic domain of F(1) is coupled via a rotary mechanism of the central stalk subunits to proton translocation. Component of the F(0) channel, it forms part of the peripheral stalk, linking F(1) to F(0). The chain is ATP synthase subunit b from Campylobacter curvus (strain 525.92).